Consider the following 104-residue polypeptide: Large ribosomal subunit protein bL21 (104 aa).

It belongs to the bacterial ribosomal protein bL21 family. In terms of assembly, part of the 50S ribosomal subunit. Contacts protein L20.

Its function is as follows. This protein binds to 23S rRNA in the presence of protein L20. This Helicobacter pylori (strain J99 / ATCC 700824) (Campylobacter pylori J99) protein is Large ribosomal subunit protein bL21.